Here is a 179-residue protein sequence, read N- to C-terminus: NAD(P)H-quinone oxidoreductase subunit J (179 aa).

This sequence belongs to the complex I 30 kDa subunit family. As to quaternary structure, NDH-1 can be composed of about 15 different subunits; different subcomplexes with different compositions have been identified which probably have different functions. In at one experiment the initiator methionine has been seen to be kept and removed.

It is found in the cellular thylakoid membrane. The catalysed reaction is a plastoquinone + NADH + (n+1) H(+)(in) = a plastoquinol + NAD(+) + n H(+)(out). It carries out the reaction a plastoquinone + NADPH + (n+1) H(+)(in) = a plastoquinol + NADP(+) + n H(+)(out). Functionally, NDH-1 shuttles electrons from an unknown electron donor, via FMN and iron-sulfur (Fe-S) centers, to quinones in the respiratory and/or the photosynthetic chain. The immediate electron acceptor for the enzyme in this species is believed to be plastoquinone. Couples the redox reaction to proton translocation, and thus conserves the redox energy in a proton gradient. Cyanobacterial NDH-1 also plays a role in inorganic carbon-concentration. This is NAD(P)H-quinone oxidoreductase subunit J from Synechocystis sp. (strain ATCC 27184 / PCC 6803 / Kazusa).